The sequence spans 130 residues: Small ribosomal subunit protein uS9 (130 aa).

Belongs to the universal ribosomal protein uS9 family.

This chain is Small ribosomal subunit protein uS9, found in Teredinibacter turnerae (strain ATCC 39867 / T7901).